A 380-amino-acid chain; its full sequence is MAPNIRKSHPLLKMMNNSLIDLPTPSNISDWWNFGSLLGICLATQILTGLLLAAHYTADTTLAFSSVAHTCRNVQHGWLIRNLHANGASFFFICIYLHIGRGLYYGSYLYKETWNTGVILLLTLMATAFVGYVLPWGQMSFWGATVITNLFSAVPYIGQTLVEWAWGGFSVDNPTLTRFFTLHFLLPFMIMGLTLIHLTFLHESGSNNPLGIVSNCDKIPFHPYFSLKDILGFMLMLFPLMTLALFSPNLLGDPENFTPANPLVTPPHIKPEWYLLFAYAIRRSIPNKLGGVLALAASVLILFLAPLLHKSKQRTMTFRPFSQLLFWTLAANLLILTWVGSQPVEHPFIIIGQLASLTYFTILLILFPIIGALENKMLNY.

The next 4 helical transmembrane spans lie at 34–54 (FGSL…LLAA), 78–99 (WLIR…YLHI), 114–134 (WNTG…GYVL), and 179–199 (FFTL…IHLT). The heme b site is built by histidine 84 and histidine 98. Heme b-binding residues include histidine 183 and histidine 197. Histidine 202 provides a ligand contact to a ubiquinone. 4 consecutive transmembrane segments (helical) span residues 227–247 (LKDI…ALFS), 289–309 (LGGV…PLLH), 321–341 (FSQL…WVGS), and 348–368 (FIII…ILFP).

The protein belongs to the cytochrome b family. As to quaternary structure, the cytochrome bc1 complex contains 11 subunits: 3 respiratory subunits (MT-CYB, CYC1 and UQCRFS1), 2 core proteins (UQCRC1 and UQCRC2) and 6 low-molecular weight proteins (UQCRH/QCR6, UQCRB/QCR7, UQCRQ/QCR8, UQCR10/QCR9, UQCR11/QCR10 and a cleavage product of UQCRFS1). This cytochrome bc1 complex then forms a dimer. It depends on heme b as a cofactor.

It is found in the mitochondrion inner membrane. Functionally, component of the ubiquinol-cytochrome c reductase complex (complex III or cytochrome b-c1 complex) that is part of the mitochondrial respiratory chain. The b-c1 complex mediates electron transfer from ubiquinol to cytochrome c. Contributes to the generation of a proton gradient across the mitochondrial membrane that is then used for ATP synthesis. The protein is Cytochrome b (MT-CYB) of Antigone vipio (White-naped crane).